Reading from the N-terminus, the 81-residue chain is Cytotoxin 8 (81 aa).

Residues 1–21 (MKTLLLTLVVVTIVCLDLGYT) form the signal peptide. Intrachain disulfides connect C24/C42, C35/C59, C63/C74, and C75/C80.

Belongs to the three-finger toxin family. Short-chain subfamily. Type IA cytotoxin sub-subfamily. Monomer in solution; Homodimer and oligomer in the presence of negatively charged lipids forming a pore with a size ranging between 20 and 30 Angstroms. As to expression, expressed by the venom gland.

It localises to the secreted. Its subcellular location is the target cell membrane. Shows cytolytic activity on many different cells by forming pore in lipid membranes. In vivo, increases heart rate or kills the animal by cardiac arrest. In addition, it binds to heparin with high affinity, interacts with Kv channel-interacting protein 1 (KCNIP1) in a calcium-independent manner, and binds to integrin alpha-V/beta-3 (ITGAV/ITGB3) with moderate affinity. The chain is Cytotoxin 8 from Naja atra (Chinese cobra).